Consider the following 131-residue polypeptide: Fumarate reductase subunit C (131 aa).

The next 3 membrane-spanning stretches (helical) occupy residues 30 to 50 (EGTCLPQLWFSLVVLFGVFAL), 58 to 78 (AGFVGFLSNPIVMLINIVTLI), and 109 to 129 (IVRGLWGLTIVVTVVILAVAL).

This sequence belongs to the FrdC family. Part of an enzyme complex containing four subunits: a flavoprotein (FrdA), an iron-sulfur protein (FrdB), and two hydrophobic anchor proteins (FrdC and FrdD).

Its subcellular location is the cell inner membrane. Two distinct, membrane-bound, FAD-containing enzymes are responsible for the catalysis of fumarate and succinate interconversion; fumarate reductase is used in anaerobic growth, and succinate dehydrogenase is used in aerobic growth. Anchors the catalytic components of the fumarate reductase complex to the cell inner membrane, binds quinones. The protein is Fumarate reductase subunit C of Proteus mirabilis (strain HI4320).